A 450-amino-acid chain; its full sequence is Phosphoglucosamine mutase (450 aa).

Residue Ser-101 is the Phosphoserine intermediate of the active site. Positions 101, 240, 242, and 244 each coordinate Mg(2+). The residue at position 101 (Ser-101) is a Phosphoserine.

The protein belongs to the phosphohexose mutase family. Mg(2+) serves as cofactor. In terms of processing, activated by phosphorylation.

The catalysed reaction is alpha-D-glucosamine 1-phosphate = D-glucosamine 6-phosphate. Catalyzes the conversion of glucosamine-6-phosphate to glucosamine-1-phosphate. This chain is Phosphoglucosamine mutase, found in Streptococcus sanguinis (strain SK36).